A 423-amino-acid polypeptide reads, in one-letter code: MEDDCDIIIIGAGIAGTACALRCARAGLSVLLLERAEIPGSKNLSGGRLYTHALAELLPQFHLTAPLERRITHESLSLLTPDGVTTFSSLQPGGESWSVLRARFDPWLVAEAEKEGVECIPGATVDALYEENGRVCGVICGDDILRARYVVLAEGANSVLAERHGLVTRPAGEAMALGIKEVLSLETSAIEERFHLENNEGAALLFSGRICDDLPGGAFLYTNQQTLSLGIVCPLSSLTQSRVPASELLTRFKAHPAVRPLIKNTESLEYGAHLVPEGGLHSMPVQYAGNGWLLVGDALRSCVNTGISVRGMDMALTGAQAAAQTLISACQHREPQNLFPLYHHNVERSLLWDVLQRYQHVPALLQRPGWYRTWPALMQDISRDLWDQGDKPVPPLRQLFWHHLRRHGLWHLAGDVIRSLRCL.

An FAD-binding site is contributed by 7–21 (IIIIGAGIAGTACAL).

It belongs to the ETF-QO/FixC family. Requires FAD as cofactor.

Its function is as follows. Probably accepts electrons from YgcQ/YgcR and reduces a quinone. The protein is Probable electron transfer flavoprotein-quinone oxidoreductase YgcN (ygcN) of Escherichia coli (strain K12).